Here is a 230-residue protein sequence, read N- to C-terminus: Flagellar L-ring protein (230 aa).

The N-terminal stretch at 1-15 (MSRLPSLSRLCLAIA) is a signal peptide. The N-palmitoyl cysteine moiety is linked to residue Cys16. Cys16 carries the S-diacylglycerol cysteine lipid modification.

It belongs to the FlgH family. The basal body constitutes a major portion of the flagellar organelle and consists of four rings (L,P,S, and M) mounted on a central rod.

The protein resides in the cell outer membrane. Its subcellular location is the bacterial flagellum basal body. In terms of biological role, assembles around the rod to form the L-ring and probably protects the motor/basal body from shearing forces during rotation. In Xanthomonas euvesicatoria pv. vesicatoria (strain 85-10) (Xanthomonas campestris pv. vesicatoria), this protein is Flagellar L-ring protein.